Here is a 259-residue protein sequence, read N- to C-terminus: Activator of lactoyl-CoA dehydratase (259 aa).

Residues Cys125 and Cys164 each coordinate [4Fe-4S] cluster.

Homodimer. Requires [4Fe-4S] cluster as cofactor.

In terms of biological role, required for the activation of lactoyl-CoA dehydratase. This protein is extremely sensitive towards oxygen. This is Activator of lactoyl-CoA dehydratase (lcdC) from Anaerotignum propionicum (Clostridium propionicum).